The chain runs to 341 residues: Methionine import ATP-binding protein MetN 3 (341 aa).

The ABC transporter domain occupies 2-241; it reads ILLENVKKIY…PQQDITKRFV (240 aa). Position 38 to 45 (38 to 45) interacts with ATP; sequence GYSGAGKS.

Belongs to the ABC transporter superfamily. Methionine importer (TC 3.A.1.24) family. The complex is composed of two ATP-binding proteins (MetN), two transmembrane proteins (MetI) and a solute-binding protein (MetQ).

It is found in the cell membrane. The catalysed reaction is L-methionine(out) + ATP + H2O = L-methionine(in) + ADP + phosphate + H(+). It catalyses the reaction D-methionine(out) + ATP + H2O = D-methionine(in) + ADP + phosphate + H(+). Part of the ABC transporter complex MetNIQ involved in methionine import. Responsible for energy coupling to the transport system. This Bacillus anthracis protein is Methionine import ATP-binding protein MetN 3.